Reading from the N-terminus, the 251-residue chain is Imidazole glycerol phosphate synthase subunit HisF (251 aa).

Residues D11 and D130 contribute to the active site.

Belongs to the HisA/HisF family. As to quaternary structure, heterodimer of HisH and HisF.

The protein resides in the cytoplasm. It carries out the reaction 5-[(5-phospho-1-deoxy-D-ribulos-1-ylimino)methylamino]-1-(5-phospho-beta-D-ribosyl)imidazole-4-carboxamide + L-glutamine = D-erythro-1-(imidazol-4-yl)glycerol 3-phosphate + 5-amino-1-(5-phospho-beta-D-ribosyl)imidazole-4-carboxamide + L-glutamate + H(+). The protein operates within amino-acid biosynthesis; L-histidine biosynthesis; L-histidine from 5-phospho-alpha-D-ribose 1-diphosphate: step 5/9. Its function is as follows. IGPS catalyzes the conversion of PRFAR and glutamine to IGP, AICAR and glutamate. The HisF subunit catalyzes the cyclization activity that produces IGP and AICAR from PRFAR using the ammonia provided by the HisH subunit. In Thiobacillus denitrificans (strain ATCC 25259 / T1), this protein is Imidazole glycerol phosphate synthase subunit HisF.